A 108-amino-acid polypeptide reads, in one-letter code: Envelope small membrane protein (108 aa).

Residues Met1 to Glu10 lie on the Virion surface side of the membrane. A helical transmembrane segment spans residues Asn11 to Gly31. Over Arg32–Ser108 the chain is Intravirion. Residues Asn88 to Ser108 form a disordered region. Positions Gly89–Asp100 are enriched in polar residues.

The protein belongs to the gammacoronaviruses E protein family. Homooligomer. Interacts with the M membrane protein in the budding compartment of the host cell, which is located between endoplasmic reticulum and the Golgi complex. The cytoplasmic tails of both proteins are important for this function. Interacts with Nucleoprotein.

Its subcellular location is the host Golgi apparatus membrane. Its function is as follows. Plays a central role in virus morphogenesis and assembly. Acts as a viroporin and self-assembles in host membranes forming pentameric protein-lipid pores that allow ion transport. Also plays a role in the induction of apoptosis. In Gallus gallus (Chicken), this protein is Envelope small membrane protein.